A 546-amino-acid polypeptide reads, in one-letter code: DNA ligase (546 aa).

Residue Glu244 coordinates ATP. Lys246 (N6-AMP-lysine intermediate) is an active-site residue. Positions 251, 266, 295, 334, 405, and 411 each coordinate ATP.

This sequence belongs to the ATP-dependent DNA ligase family. Requires Mg(2+) as cofactor.

It catalyses the reaction ATP + (deoxyribonucleotide)n-3'-hydroxyl + 5'-phospho-(deoxyribonucleotide)m = (deoxyribonucleotide)n+m + AMP + diphosphate.. Its function is as follows. DNA ligase that seals nicks in double-stranded DNA during DNA replication, DNA recombination and DNA repair. This chain is DNA ligase, found in Methanocorpusculum labreanum (strain ATCC 43576 / DSM 4855 / Z).